A 152-amino-acid polypeptide reads, in one-letter code: Adrenodoxin-like protein 2, mitochondrial (152 aa).

A mitochondrion-targeting transit peptide spans 1-29 (MLVINSCRAASRLALRSLNLRSPIATRTF). A 2Fe-2S ferredoxin-type domain is found at 41-146 (VNITFVRANG…GLEVHVPSTI (106 aa)). 4 residues coordinate [2Fe-2S] cluster: Cys80, Cys86, Cys89, and Cys127.

Belongs to the adrenodoxin/putidaredoxin family. The cofactor is [2Fe-2S] cluster.

The protein resides in the mitochondrion. Functionally, required for ecdysteroidogenesis in the prothoracic gland which is necessary for larval to pupal transition. This Drosophila melanogaster (Fruit fly) protein is Adrenodoxin-like protein 2, mitochondrial.